A 227-amino-acid chain; its full sequence is Ornithine decarboxylase antizyme 1 (227 aa).

This sequence belongs to the ODC antizyme family. As to quaternary structure, interacts with ODC1 and thereby sterically blocks ODC homodimerization. Forms a ternary complex with PSMB4 and OAZ1 before PSMB4 is incorporated into the 20S proteasome. Interacts with AZIN2; this interaction disrupts the interaction between the antizyme and ODC1. Interacts with FAM171A1.

Ornithine decarboxylase (ODC) antizyme protein that negatively regulates ODC activity and intracellular polyamine biosynthesis and uptake in response to increased intracellular polyamine levels. Binds to ODC monomers, inhibiting the assembly of the functional ODC homodimer, and targets the monomers for ubiquitin-independent proteolytic destruction by the 26S proteasome. Triggers ODC degradation by inducing the exposure of a cryptic proteasome-interacting surface of ODC. Stabilizes AZIN2 by interfering with its ubiquitination. Also inhibits cellular uptake of polyamines by inactivating the polyamine uptake transporter. SMAD1/OAZ1/PSMB4 complex mediates the degradation of the CREBBP/EP300 repressor SNIP1. Involved in the translocation of AZIN2 from ER-Golgi intermediate compartment (ERGIC) to the cytosol. This chain is Ornithine decarboxylase antizyme 1 (Oaz1), found in Mus musculus (Mouse).